The sequence spans 358 residues: Ornithine cyclodeaminase (358 aa).

Arg-52 and Lys-76 together coordinate L-ornithine. NAD(+) contacts are provided by residues Thr-91, Arg-119, 146–147 (AQ), Asp-168, Thr-208, 231–234 (VGGD), Lys-238, and Ser-299. Position 119 (Arg-119) interacts with L-ornithine. Asp-234 contributes to the L-ornithine binding site. Asp-234 acts as the Proton donor/acceptor in catalysis. Val-300 provides a ligand contact to L-ornithine.

The protein belongs to the ornithine cyclodeaminase/mu-crystallin family. NAD(+) serves as cofactor.

The catalysed reaction is L-ornithine = L-proline + NH4(+). It participates in amino-acid biosynthesis; L-proline biosynthesis; L-proline from L-ornithine: step 1/1. Its function is as follows. Catalyzes the conversion of L-ornithine into L-proline with release of ammonia. The sequence is that of Ornithine cyclodeaminase from Brucella suis biovar 1 (strain 1330).